Here is a 195-residue protein sequence, read N- to C-terminus: HTH-type transcriptional regulator BetI (195 aa).

Residues 8 to 68 form the HTH tetR-type domain; it reads SIRRRQLIDA…ATMRDITSQL (61 aa). Positions 31–50 form a DNA-binding region, H-T-H motif; sequence TIAQIARRAGVSTGIISHYF.

The protein operates within amine and polyamine biosynthesis; betaine biosynthesis via choline pathway [regulation]. Repressor involved in the biosynthesis of the osmoprotectant glycine betaine. It represses transcription of the choline transporter BetT and the genes of BetAB involved in the synthesis of glycine betaine. This chain is HTH-type transcriptional regulator BetI, found in Escherichia coli (strain UTI89 / UPEC).